A 178-amino-acid chain; its full sequence is uncharacterized protein (178 aa).

Belongs to the tail fiber family.

This is an uncharacterized protein from Escherichia coli (strain K12).